Reading from the N-terminus, the 82-residue chain is Translational regulator CsrA (82 aa).

This sequence belongs to the CsrA/RsmA family. Homodimer; the beta-strands of each monomer intercalate to form a hydrophobic core, while the alpha-helices form wings that extend away from the core.

The protein localises to the cytoplasm. A translational regulator that binds mRNA to regulate translation initiation and/or mRNA stability. Usually binds in the 5'-UTR at or near the Shine-Dalgarno sequence preventing ribosome-binding, thus repressing translation. Its main target seems to be the major flagellin gene, while its function is anatagonized by FliW. This Brachyspira hyodysenteriae (strain ATCC 49526 / WA1) protein is Translational regulator CsrA.